A 299-amino-acid polypeptide reads, in one-letter code: tRNA-cytidine(32) 2-sulfurtransferase (299 aa).

A PP-loop motif motif is present at residues 49-54 (SGGKDS). [4Fe-4S] cluster is bound by residues C124, C127, and C215.

This sequence belongs to the TtcA family. Homodimer. Requires Mg(2+) as cofactor. It depends on [4Fe-4S] cluster as a cofactor.

Its subcellular location is the cytoplasm. The catalysed reaction is cytidine(32) in tRNA + S-sulfanyl-L-cysteinyl-[cysteine desulfurase] + AH2 + ATP = 2-thiocytidine(32) in tRNA + L-cysteinyl-[cysteine desulfurase] + A + AMP + diphosphate + H(+). It functions in the pathway tRNA modification. In terms of biological role, catalyzes the ATP-dependent 2-thiolation of cytidine in position 32 of tRNA, to form 2-thiocytidine (s(2)C32). The sulfur atoms are provided by the cysteine/cysteine desulfurase (IscS) system. The protein is tRNA-cytidine(32) 2-sulfurtransferase of Deinococcus radiodurans (strain ATCC 13939 / DSM 20539 / JCM 16871 / CCUG 27074 / LMG 4051 / NBRC 15346 / NCIMB 9279 / VKM B-1422 / R1).